The following is a 231-amino-acid chain: Phosphatidylserine decarboxylase proenzyme (231 aa).

S188 acts as the Schiff-base intermediate with substrate; via pyruvic acid in catalysis. Residue S188 is modified to Pyruvic acid (Ser); by autocatalysis.

Belongs to the phosphatidylserine decarboxylase family. PSD-A subfamily. Heterodimer of a large membrane-associated beta subunit and a small pyruvoyl-containing alpha subunit. It depends on pyruvate as a cofactor. Post-translationally, is synthesized initially as an inactive proenzyme. Formation of the active enzyme involves a self-maturation process in which the active site pyruvoyl group is generated from an internal serine residue via an autocatalytic post-translational modification. Two non-identical subunits are generated from the proenzyme in this reaction, and the pyruvate is formed at the N-terminus of the alpha chain, which is derived from the carboxyl end of the proenzyme. The post-translation cleavage follows an unusual pathway, termed non-hydrolytic serinolysis, in which the side chain hydroxyl group of the serine supplies its oxygen atom to form the C-terminus of the beta chain, while the remainder of the serine residue undergoes an oxidative deamination to produce ammonia and the pyruvoyl prosthetic group on the alpha chain.

It localises to the cell membrane. It catalyses the reaction a 1,2-diacyl-sn-glycero-3-phospho-L-serine + H(+) = a 1,2-diacyl-sn-glycero-3-phosphoethanolamine + CO2. The protein operates within phospholipid metabolism; phosphatidylethanolamine biosynthesis; phosphatidylethanolamine from CDP-diacylglycerol: step 2/2. Its function is as follows. Catalyzes the formation of phosphatidylethanolamine (PtdEtn) from phosphatidylserine (PtdSer). In Rickettsia prowazekii (strain Madrid E), this protein is Phosphatidylserine decarboxylase proenzyme.